We begin with the raw amino-acid sequence, 2495 residues long: Zinc finger protein 462 (2495 aa).

3 consecutive C2H2-type zinc fingers follow at residues 4-27 (LQCD…QDVH), 108-131 (FQCK…RKVH), and 162-185 (FSCQ…KMYH). A Glycyl lysine isopeptide (Lys-Gly) (interchain with G-Cter in SUMO1); alternate cross-link involves residue Lys-20. Residue Lys-20 forms a Glycyl lysine isopeptide (Lys-Gly) (interchain with G-Cter in SUMO2); alternate linkage. An interaction with PBX1 region spans residues 215 to 241 (PCKELPAEVVERSILESMVKPLTKSRG). Residues Lys-234 and Lys-271 each participate in a glycyl lysine isopeptide (Lys-Gly) (interchain with G-Cter in SUMO2) cross-link. Disordered regions lie at residues 278 to 301 (QQEG…NSTY), 329 to 357 (RPNS…NSGL), and 370 to 395 (DMTN…DLNE). Residues 332-343 (SSSTSKFSSSMS) show a composition bias toward low complexity. Residues Lys-337, Lys-348, and Lys-350 each participate in a glycyl lysine isopeptide (Lys-Gly) (interchain with G-Cter in SUMO2) cross-link. Residues Ser-351 and Ser-355 each carry the phosphoserine modification. The span at 370 to 387 (DMTNSSADLDTNSMLNDS) shows a compositional bias: polar residues. Lys-429 participates in a covalent cross-link: Glycyl lysine isopeptide (Lys-Gly) (interchain with G-Cter in SUMO2). 2 consecutive C2H2-type zinc fingers follow at residues 440–463 (FQCP…ENIH) and 471–493 (YKCD…KQCH). Lys-485 is covalently cross-linked (Glycyl lysine isopeptide (Lys-Gly) (interchain with G-Cter in SUMO2)). The segment at 492-590 (CHTGTSDWDT…PQPPTQAPPL (99 aa)) is disordered. Polar residues predominate over residues 493-502 (HTGTSDWDTV). Positions 503–515 (NSQSESLSSSLNE) are enriched in low complexity. The span at 542 to 590 (PPQPPPPLPPPPPPPSQPLPQPPPPPLQSPHQVPPPTQQPQPPTQAPPL) shows a compositional bias: pro residues. A C2H2-type 6 zinc finger spans residues 593-616 (YKCTMCSYSTMTLKGLRVHQQHKH). Glycyl lysine isopeptide (Lys-Gly) (interchain with G-Cter in SUMO2) cross-links involve residues Lys-624, Lys-650, and Lys-661. The interval 629–654 (PSSLPLENETDSHPSSSNTVKKSQTS) is disordered. The segment covering 641-654 (HPSSSNTVKKSQTS) has biased composition (polar residues). Residue Ser-681 is modified to Phosphoserine. Residue Lys-699 forms a Glycyl lysine isopeptide (Lys-Gly) (interchain with G-Cter in SUMO2) linkage. C2H2-type zinc fingers lie at residues 835–858 (YYCK…QRMH), 878–900 (YRCL…YGEH), and 917–940 (YRCR…QRMH). Residue Lys-978 forms a Glycyl lysine isopeptide (Lys-Gly) (interchain with G-Cter in SUMO2) linkage. Residues 980–999 (MATSTPVARGGGLPATFNKN) are disordered. A C2H2-type 10 zinc finger spans residues 1023–1046 (YDCDVCSFASPNMHSVLVHYQKKH). Ser-1083 carries the phosphoserine modification. Residue Lys-1128 forms a Glycyl lysine isopeptide (Lys-Gly) (interchain with G-Cter in SUMO2) linkage. Phosphoserine is present on Ser-1159. Residues Lys-1196, Lys-1204, Lys-1210, and Lys-1232 each participate in a glycyl lysine isopeptide (Lys-Gly) (interchain with G-Cter in SUMO2) cross-link. 2 C2H2-type zinc fingers span residues 1254 to 1277 (LKCR…KKDH) and 1459 to 1482 (YQCT…GKKH). A Glycyl lysine isopeptide (Lys-Gly) (interchain with G-Cter in SUMO2) cross-link involves residue Lys-1488. The segment at 1504–1527 (YKCRHCPYINTRIHGVLTHYQKRH) adopts a C2H2-type 13 zinc-finger fold. Residues Lys-1560 and Lys-1580 each participate in a glycyl lysine isopeptide (Lys-Gly) (interchain with G-Cter in SUMO2) cross-link. 3 C2H2-type zinc fingers span residues 1566 to 1589 (YRCK…EKYH), 1649 to 1672 (FRCQ…RIKH), and 1686 to 1709 (FKCA…QKRH). Glycyl lysine isopeptide (Lys-Gly) (interchain with G-Cter in SUMO2) cross-links involve residues Lys-1687 and Lys-1769. The segment at 1881-1903 (FQCKHCDSKLQSIAELTSHLNIH) adopts a C2H2-type 17 zinc-finger fold. A Glycyl lysine isopeptide (Lys-Gly) (interchain with G-Cter in SUMO2) cross-link involves residue Lys-1935. The segment at 1957–1981 (YKCKFCVEVHPTLRAICNHLRKHVQ) adopts a C2H2-type 18; degenerate zinc-finger fold. Lys-1993 is subject to N6-methyllysine. C2H2-type zinc fingers lie at residues 2014–2037 (YSCQ…QTHH), 2043–2066 (FRCK…LKAH), and 2072–2095 (YKCS…LKVH). A Glycyl lysine isopeptide (Lys-Gly) (interchain with G-Cter in SUMO2) cross-link involves residue Lys-2093. Composition is skewed to polar residues over residues 2112 to 2121 (SHAHPSSQKA) and 2132 to 2149 (DSSY…NHYQ). A disordered region spans residues 2112–2172 (SHAHPSSQKA…VPPSGTAAGT (61 aa)). 2 positions are modified to phosphoserine: Ser-2161 and Ser-2166. C2H2-type zinc fingers lie at residues 2180 to 2203 (LHCE…RDKH), 2209 to 2232 (FKCK…EAGH), and 2243 to 2265 (LRCP…IVLH). Residue Lys-2282 forms a Glycyl lysine isopeptide (Lys-Gly) (interchain with G-Cter in SUMO2) linkage. C2H2-type zinc fingers lie at residues 2289–2311 (FRCD…IEKH) and 2317–2340 (YKCQ…RDEH). A disordered region spans residues 2361–2387 (KEKIESSSSEDEDKDDEMSSKAEDREL). A compositionally biased stretch (basic and acidic residues) spans 2377-2387 (EMSSKAEDREL). The C2H2-type 27 zinc-finger motif lies at 2403–2425 (FPCEFCGRAFSQGSEWERHVLRH). Lys-2493 participates in a covalent cross-link: Glycyl lysine isopeptide (Lys-Gly) (interchain with G-Cter in SUMO2).

In terms of assembly, interacts with PBX1 isoform PBX1b; this interaction prevents PBX1-HOXA9 heterodimer from forming and binding to DNA. Expressed in the cerebral cortex (at protein level). Expressed in embryonic stem cells (at protein level). Expressed in heart, liver, kidney, muscle, and female and male genital tracts (at protein level).

It is found in the nucleus. In terms of biological role, zinc finger nuclear factor involved in transcription by regulating chromatin structure and organization. Involved in the pluripotency and differentiation of embryonic stem cells by regulating SOX2, POU5F1/OCT4, and NANOG. By binding PBX1, prevents the heterodimerization of PBX1 and HOXA9 and their binding to DNA. Regulates neuronal development and neural cell differentiation. The polypeptide is Zinc finger protein 462 (Mus musculus (Mouse)).